The sequence spans 372 residues: AA9 family lytic polysaccharide monooxygenase C (372 aa).

A signal peptide spans 1–16 (MFRSALFLLLAPLALS). Cu(2+) contacts are provided by His17 and His99. The cysteines at positions 59 and 189 are disulfide-linked. O2-binding residues include His174 and Gln184. Tyr186 provides a ligand contact to Cu(2+).

Belongs to the polysaccharide monooxygenase AA9 family. It depends on Cu(2+) as a cofactor.

Its subcellular location is the secreted. The enzyme catalyses [(1-&gt;4)-beta-D-glucosyl]n+m + reduced acceptor + O2 = 4-dehydro-beta-D-glucosyl-[(1-&gt;4)-beta-D-glucosyl]n-1 + [(1-&gt;4)-beta-D-glucosyl]m + acceptor + H2O.. In terms of biological role, lytic polysaccharide monooxygenase (LPMO) that depolymerizes crystalline and amorphous polysaccharides via the oxidation of scissile alpha- or beta-(1-4)-glycosidic bonds, yielding C1 or C4 oxidation products. Catalysis by LPMOs requires the reduction of the active-site copper from Cu(II) to Cu(I) by a reducing agent and H(2)O(2) or O(2) as a cosubstrate. In Aspergillus tamarii, this protein is AA9 family lytic polysaccharide monooxygenase C.